Reading from the N-terminus, the 323-residue chain is tRNA N6-adenosine threonylcarbamoyltransferase (323 aa).

Positions 110 and 114 each coordinate Fe cation. Residues 131 to 135 (VASGG), Asp-164, Gly-177, and Asn-264 each bind substrate. Asp-288 lines the Fe cation pocket.

It belongs to the KAE1 / TsaD family. Fe(2+) is required as a cofactor.

It localises to the cytoplasm. It catalyses the reaction L-threonylcarbamoyladenylate + adenosine(37) in tRNA = N(6)-L-threonylcarbamoyladenosine(37) in tRNA + AMP + H(+). Required for the formation of a threonylcarbamoyl group on adenosine at position 37 (t(6)A37) in tRNAs that read codons beginning with adenine. Is involved in the transfer of the threonylcarbamoyl moiety of threonylcarbamoyl-AMP (TC-AMP) to the N6 group of A37, together with TsaE and TsaB. TsaD likely plays a direct catalytic role in this reaction. The chain is tRNA N6-adenosine threonylcarbamoyltransferase from Thermus thermophilus (strain ATCC BAA-163 / DSM 7039 / HB27).